Consider the following 312-residue polypeptide: R2-like ligand binding oxidase (312 aa).

Glu68, Glu101, and His104 together coordinate Mn(2+). A cross-link (3-(O4'-tyrosyl)-valine (Val-Tyr)) is located at residues 71–162; sequence VTQDIQPFMA…AAQVRASVTY (92 aa). Glu101 serves as a coordination point for Fe cation. The Fe cation site is built by Glu167, Glu202, and His205.

The protein belongs to the ribonucleoside diphosphate reductase small chain family. R2-like ligand binding oxidase subfamily. In terms of assembly, homodimer. Fe cation serves as cofactor. The cofactor is Mn(2+).

In terms of biological role, probable oxidase that might be involved in lipid metabolism. The polypeptide is R2-like ligand binding oxidase (Mycolicibacterium vanbaalenii (strain DSM 7251 / JCM 13017 / BCRC 16820 / KCTC 9966 / NRRL B-24157 / PYR-1) (Mycobacterium vanbaalenii)).